A 61-amino-acid polypeptide reads, in one-letter code: Myrmicitoxin(1)-Pm5a (61 aa).

The signal sequence occupies residues 1–23 (MKAIIFLFAVLTVVAIIIPIISG). The propeptide occupies 24–33 (EPNAGPLAAS). The residue at position 60 (Gln60) is a Glutamine amide.

This sequence belongs to the formicidae venom clade 2 family. Expressed by the venom gland.

The protein resides in the secreted. Functionally, toxin that causes a rapid and irreversible paralysis when intrathoracically injected into insects (blowflies). Does not cause spontaneous nocifensive behaviors by intraplantar injection in mice. This is Myrmicitoxin(1)-Pm5a from Pogonomyrmex maricopa (Maricopa harvester ant).